A 228-amino-acid chain; its full sequence is Early nodulin-like protein 18 (228 aa).

The N-terminal stretch at 1 to 26 is a signal peptide; the sequence is MSPSCSSCVNVLLIMCLMLLSLSADA. One can recognise a Phytocyanin domain in the interval 28-148; sequence KNYTVGESTG…GQHFMINVTH (121 aa). N29, N71, N94, and N145 each carry an N-linked (GlcNAc...) asparagine glycan. An intrachain disulfide couples C86 to C136. The segment at 148 to 211 is disordered; that stretch reads HGQGLPDSSS…VHSKKSSSST (64 aa). Over residues 153–170 the composition is skewed to low complexity; sequence PDSSSPDDAAAPGPSESS. Basic and acidic residues predominate over residues 188–204; it reads DHPKDIESADDDKEVHS. Residue S204 is the site of GPI-anchor amidated serine attachment. A propeptide spans 205 to 228 (removed in mature form); sequence KKSSSSTTKTSLFCFVFMGLFASF.

Belongs to the early nodulin-like (ENODL) family. Mostly expressed in seedlings, roots and flowers, and, to a lower extent, in leaves, stems and seeds.

Its subcellular location is the cell membrane. Functionally, may act as a carbohydrate transporter. The polypeptide is Early nodulin-like protein 18 (Arabidopsis thaliana (Mouse-ear cress)).